The primary structure comprises 212 residues: Large ribosomal subunit protein uL4 (212 aa).

It belongs to the universal ribosomal protein uL4 family. Part of the 50S ribosomal subunit.

Functionally, one of the primary rRNA binding proteins, this protein initially binds near the 5'-end of the 23S rRNA. It is important during the early stages of 50S assembly. It makes multiple contacts with different domains of the 23S rRNA in the assembled 50S subunit and ribosome. Forms part of the polypeptide exit tunnel. This Caulobacter vibrioides (strain ATCC 19089 / CIP 103742 / CB 15) (Caulobacter crescentus) protein is Large ribosomal subunit protein uL4.